Here is a 138-residue protein sequence, read N- to C-terminus: U1 small nuclear ribonucleoprotein C (138 aa).

The Matrin-type zinc-finger motif lies at 4–36 (YYCDYCDTFLTHDSPSVRKTHNNGRKHKENVRF). Positions 58–138 (QSKPNSQMPP…MGRPPMSLRS (81 aa)) are disordered. The span at 67-109 (PNAPPGLMPPPGMLPPPGGMPPGRMPPQGLPFPPPGPIPPPPG) shows a compositional bias: pro residues. Over residues 113 to 138 (MRPPHGQMHMGGPRPQMGRPPMSLRS) the composition is skewed to low complexity.

The protein belongs to the U1 small nuclear ribonucleoprotein C family. As to quaternary structure, U1 snRNP is composed of the 7 core Sm proteins B/B', D1, D2, D3, E, F and G that assemble in a heptameric protein ring on the Sm site of the small nuclear RNA to form the core snRNP, and at least 3 U1 snRNP-specific proteins U1-70K, U1-A and U1-C. U1-C interacts with U1 snRNA and the 5' splice-site region of the pre-mRNA.

Its subcellular location is the nucleus. In terms of biological role, component of the spliceosomal U1 snRNP, which is essential for recognition of the pre-mRNA 5' splice-site and the subsequent assembly of the spliceosome. U1-C is directly involved in initial 5' splice-site recognition for both constitutive and regulated alternative splicing. The interaction with the 5' splice-site seems to precede base-pairing between the pre-mRNA and the U1 snRNA. Stimulates commitment or early (E) complex formation by stabilizing the base pairing of the 5' end of the U1 snRNA and the 5' splice-site region. The polypeptide is U1 small nuclear ribonucleoprotein C (Nematostella vectensis (Starlet sea anemone)).